The sequence spans 558 residues: MVDSGTEARARGKAEAGLQDGISGPAAARVNGKTQAKAVAEAELKTESVTQAKAGDGAMTRTHTVTYREAMAVTREVIKVEDTTKTRVMVQTKTKPLAERSIVPQTKSRAMPISRVSTVTKSEVKVVAVIEANIKSYAKSHDKANTGSRPDRREEASIGMKSSDEDEENICSWFWTGEEPSVGSWFWPEEETSLQVYKPLPKIQEKPKPTHKPTLTIKQTVIAWSRARYIVLVPVEGGEQSFPPEGNWTLVETLIETPLGIRPLTKIPPYHGPYYQTLAEIKKQIRQREKYGPNPKACHCKSRGFSLEPKEFDKLVALLKLTKDPFIHEIATMIMGISPAYPFTQDIIHDVGITVMIENLVSNPNVKEHPRALSMVDDSSESSEGPKSGESYIHQVCKGILSCPMNSPVQLAGLKLLGHLSVKFEDHYVITSYIPDFLTLLNKGSVKTKFYVLKVFSCLSKNHANTRELISAKVLSSLVAPFNKNESKANILNIIEIFENINFQVKTKAKLFTKEKFTKSELISIFQEAKQFGQKLQDLAEHSDPEVRDKVIRLILKL.

2 stretches are compositionally biased toward basic and acidic residues: residues 1–14 and 139–156; these read MVDS…RGKA and KSHD…REEA. 2 disordered regions span residues 1–34 and 139–163; these read MVDS…NGKT and KSHD…MKSS. 4 ARM repeats span residues 300-339, 422-461, 463-503, and 520-558; these read CKSR…GISP, VKFE…CLSK, HANT…NINF, and SELI…ILKL.

This sequence belongs to the eutherian X-chromosome-specific Armcx family.

The sequence is that of Armadillo repeat-containing X-linked protein 5 (ARMCX5) from Pongo abelii (Sumatran orangutan).